Here is a 574-residue protein sequence, read N- to C-terminus: uncharacterized protein (574 aa).

The interval 297–317 is disordered; the sequence is SAASKPRKRKKDEVSGAQVNS.

This is an uncharacterized protein from Mus musculus (Mouse).